A 151-amino-acid polypeptide reads, in one-letter code: ALK and LTK ligand 2 (151 aa).

The N-terminal stretch at 1–25 (MRVSGRPMLLALLLLLSTVGDPGHA) is a signal peptide. Disulfide bonds link Cys-112/Cys-148 and Cys-126/Cys-135.

It belongs to the ALKAL family. Homodimer.

The protein resides in the secreted. It localises to the cell membrane. In terms of biological role, cytokine that acts as a physiological ligand for receptor tyrosine kinases LTK and ALK, leading to their activation. Cytokine-binding is sufficient to activate LTK. In contrast, ALKAL2-driven activation of ALK is coupled with heparin-binding to ALK. Stimulation of ALK signaling is involved in neural development and regulation of energy expenditure. The protein is ALK and LTK ligand 2 of Rattus norvegicus (Rat).